The sequence spans 612 residues: Dihydroxy-acid dehydratase (612 aa).

Asp-81 is a Mg(2+) binding site. Cys-122 is a binding site for [2Fe-2S] cluster. Residues Asp-123 and Lys-124 each contribute to the Mg(2+) site. The residue at position 124 (Lys-124) is an N6-carboxylysine. Cys-193 is a [2Fe-2S] cluster binding site. A Mg(2+)-binding site is contributed by Glu-489. Residue Ser-515 is the Proton acceptor of the active site.

It belongs to the IlvD/Edd family. As to quaternary structure, homodimer. [2Fe-2S] cluster serves as cofactor. Mg(2+) is required as a cofactor.

The enzyme catalyses (2R)-2,3-dihydroxy-3-methylbutanoate = 3-methyl-2-oxobutanoate + H2O. The catalysed reaction is (2R,3R)-2,3-dihydroxy-3-methylpentanoate = (S)-3-methyl-2-oxopentanoate + H2O. It participates in amino-acid biosynthesis; L-isoleucine biosynthesis; L-isoleucine from 2-oxobutanoate: step 3/4. It functions in the pathway amino-acid biosynthesis; L-valine biosynthesis; L-valine from pyruvate: step 3/4. In terms of biological role, functions in the biosynthesis of branched-chain amino acids. Catalyzes the dehydration of (2R,3R)-2,3-dihydroxy-3-methylpentanoate (2,3-dihydroxy-3-methylvalerate) into 2-oxo-3-methylpentanoate (2-oxo-3-methylvalerate) and of (2R)-2,3-dihydroxy-3-methylbutanoate (2,3-dihydroxyisovalerate) into 2-oxo-3-methylbutanoate (2-oxoisovalerate), the penultimate precursor to L-isoleucine and L-valine, respectively. The sequence is that of Dihydroxy-acid dehydratase from Teredinibacter turnerae (strain ATCC 39867 / T7901).